The following is a 493-amino-acid chain: D-glyceraldehyde dehydrogenase (NADP(+)) (493 aa).

NADP(+) is bound by residues T144 to N147, R155, K170 to D174, K202 to D208, G223 to L246, C279, and E379 to F381. Substrate is bound by residues N147 and R155. Catalysis depends on E245, which acts as the Proton acceptor. A substrate-binding site is contributed by C279. The active-site Proton donor is the C279.

It belongs to the aldehyde dehydrogenase family. Glyceraldehyde dehydrogenase subfamily. As to quaternary structure, homotetramer. Dimer of dimers.

It catalyses the reaction D-glyceraldehyde + NADP(+) + H2O = (R)-glycerate + NADPH + 2 H(+). It participates in carbohydrate degradation; glycolysis. With respect to regulation, stable for 2 hours at 60 degrees Celsius but activity is decreased to less than 50 percent within 15 minutes at 70 degrees Celsius. NADP-dependent dehydrogenase of the nED (non-phosphorylated Entner-Doudoroff) pathway with highest activity towards glyceraldehydes (e.g. D,L-glyceraldehyde and D-glyceraldehyde), to a lesser extent towards D,L-glyceraldehyde-3-phosphate and glycolaldehyde, but no activity towards aliphatic or aromatic aldehydes. The sequence is that of D-glyceraldehyde dehydrogenase (NADP(+)) from Picrophilus torridus (strain ATCC 700027 / DSM 9790 / JCM 10055 / NBRC 100828 / KAW 2/3).